The chain runs to 324 residues: Putative arsenical pump-driving ATPase (324 aa).

21 to 28 (GKGGVGKT) is a binding site for ATP.

This sequence belongs to the arsA ATPase family.

It catalyses the reaction arsenite(in) + ATP + H2O = arsenite(out) + ADP + phosphate + H(+). Anion-transporting ATPase. Catalyzes the extrusion of arsenite. The polypeptide is Putative arsenical pump-driving ATPase (Methanothermobacter thermautotrophicus (strain ATCC 29096 / DSM 1053 / JCM 10044 / NBRC 100330 / Delta H) (Methanobacterium thermoautotrophicum)).